Reading from the N-terminus, the 338-residue chain is tRNA N6-adenosine threonylcarbamoyltransferase (338 aa).

Fe cation is bound by residues histidine 114 and histidine 118. Substrate-binding positions include 137–141 (IVSGG), aspartate 170, glycine 183, aspartate 187, and asparagine 277. Aspartate 305 serves as a coordination point for Fe cation.

Belongs to the KAE1 / TsaD family. Requires Fe(2+) as cofactor.

The protein resides in the cytoplasm. It catalyses the reaction L-threonylcarbamoyladenylate + adenosine(37) in tRNA = N(6)-L-threonylcarbamoyladenosine(37) in tRNA + AMP + H(+). Its function is as follows. Required for the formation of a threonylcarbamoyl group on adenosine at position 37 (t(6)A37) in tRNAs that read codons beginning with adenine. Is involved in the transfer of the threonylcarbamoyl moiety of threonylcarbamoyl-AMP (TC-AMP) to the N6 group of A37, together with TsaE and TsaB. TsaD likely plays a direct catalytic role in this reaction. The sequence is that of tRNA N6-adenosine threonylcarbamoyltransferase from Clostridioides difficile (strain 630) (Peptoclostridium difficile).